We begin with the raw amino-acid sequence, 262 residues long: MEIIPPRLKEPLYRLYELRLRQGLAASKSDLPRHIAVLCDGNRRWARSAGYDDVSYGYRMGAAKIAEMLRWCHEAGIELATVYLLSTENLQRDPDELAALIEIITDVVEEICAPANHWSVRTVGDLGLIGEEPARRLRGAVESTPEVASFHVNVAVGYGGRREIVDAVRALLSKELANGATAEELVDAVTVEGISENLYTSGQPDPDLVIRTSGEQRLSGFLLWQSAYSEMWFTEAHWPAFRHVDFLRALRDYSARHRSYGR.

The active site involves D40. D40 serves as a coordination point for Mg(2+). Substrate-binding positions include 41-44 (GNRR), W45, and 86-88 (STE). N89 functions as the Proton acceptor in the catalytic mechanism. Substrate is bound by residues R92, R211, and 217 to 219 (RLS). E230 serves as a coordination point for Mg(2+).

The protein belongs to the UPP synthase family. Z-FPP synthase subfamily. As to quaternary structure, homodimer. Requires Mg(2+) as cofactor.

It is found in the cytoplasm. Its subcellular location is the cell membrane. The enzyme catalyses isopentenyl diphosphate + (2E)-geranyl diphosphate = (2Z,6E)-farnesyl diphosphate + diphosphate. Catalyzes the condensation of only one isopentenyl pyrophosphate (IPP) unit in the cis configuration to E-geranyl diphosphate (E-GPP) generating the 15 carbon product (2Z,6E)-farnesyl diphosphate (Z-FPP or EZ-FPP). Z-FPP is the precursor of decaprenyl diphosphate, which has a central role in the biosynthesis of the mycobacterial cell wall. The polypeptide is (2Z,6E)-farnesyl diphosphate synthase (Mycobacterium tuberculosis (strain CDC 1551 / Oshkosh)).